The chain runs to 142 residues: MKTFSAKPQEVERKWYVIDAADKVLGRVAVEAANILRGKNKTIFTPHVDCGDFVIIVNADKVVLTGNKENAKIYTRFSGYVGGKQVDTPRKIRARRPELLLELAVKGMVPHTRLGRQQMTKLKVYAGASHPHEAQQPTAITL.

Belongs to the universal ribosomal protein uL13 family. As to quaternary structure, part of the 50S ribosomal subunit.

In terms of biological role, this protein is one of the early assembly proteins of the 50S ribosomal subunit, although it is not seen to bind rRNA by itself. It is important during the early stages of 50S assembly. This is Large ribosomal subunit protein uL13 from Akkermansia muciniphila (strain ATCC BAA-835 / DSM 22959 / JCM 33894 / BCRC 81048 / CCUG 64013 / CIP 107961 / Muc).